Here is a 215-residue protein sequence, read N- to C-terminus: Small ribosomal subunit protein eS1 (215 aa).

Residues 195 to 215 are disordered; that stretch reads SGMQEPQKNEPAPGGEAIAQN.

This sequence belongs to the eukaryotic ribosomal protein eS1 family.

The sequence is that of Small ribosomal subunit protein eS1 from Thermoplasma acidophilum (strain ATCC 25905 / DSM 1728 / JCM 9062 / NBRC 15155 / AMRC-C165).